The following is a 590-amino-acid chain: NADH-ubiquinone oxidoreductase chain 5 (590 aa).

15 helical membrane passes run 1 to 21 (MNLI…MSIM), 31 to 51 (LMVL…NNEL), 77 to 97 (LLFT…SLWY), 104 to 124 (INKF…IITA), 130 to 150 (LFIG…WWHG), 167 to 187 (IGDI…SINM), 190 to 210 (LMIQ…AAAT), 230 to 250 (TPVS…FLLI), 261 to 281 (IMLT…AAAA), 314 to 336 (AFLH…GSYI), 355 to 375 (LPMT…MPFL), 398 to 418 (IMIT…IMLF), 439 to 461 (HPLA…STLQ), 466 to 486 (VTMP…GVLL), and 568 to 588 (MIKN…LFIM).

This sequence belongs to the complex I subunit 5 family.

The protein resides in the mitochondrion inner membrane. It catalyses the reaction a ubiquinone + NADH + 5 H(+)(in) = a ubiquinol + NAD(+) + 4 H(+)(out). In terms of biological role, core subunit of the mitochondrial membrane respiratory chain NADH dehydrogenase (Complex I) that is believed to belong to the minimal assembly required for catalysis. Complex I functions in the transfer of electrons from NADH to the respiratory chain. The immediate electron acceptor for the enzyme is believed to be ubiquinone. This chain is NADH-ubiquinone oxidoreductase chain 5 (MT-ND5), found in Lycodon semicarinatus (Ryukyu odd-tooth snake).